The following is a 272-amino-acid chain: Peptidoglycolipid exporter Gap (272 aa).

6 consecutive transmembrane segments (helical) span residues 5–25 (ILGL…ILLV), 36–56 (VVFW…PLFV), 79–99 (IEPF…VIAL), 171–191 (LWVA…VLLV), 206–226 (IIAV…TLLS), and 252–272 (ILLV…LGVI).

Belongs to the peptidoglycolipid addressing protein (GAP) (TC 2.A.116) family.

Its subcellular location is the cell inner membrane. In terms of biological role, required for the transport of peptidoglycolipids (GPLs) to the cell surface. The polypeptide is Peptidoglycolipid exporter Gap (Mycolicibacterium smegmatis (strain ATCC 700084 / mc(2)155) (Mycobacterium smegmatis)).